The sequence spans 322 residues: 4-hydroxythreonine-4-phosphate dehydrogenase (322 aa).

2 residues coordinate substrate: H126 and T127. Positions 160, 205, and 260 each coordinate a divalent metal cation. The substrate site is built by K268, N277, and R286.

The protein belongs to the PdxA family. Homodimer. It depends on Zn(2+) as a cofactor. The cofactor is Mg(2+). Co(2+) is required as a cofactor.

The protein resides in the cytoplasm. It carries out the reaction 4-(phosphooxy)-L-threonine + NAD(+) = 3-amino-2-oxopropyl phosphate + CO2 + NADH. It functions in the pathway cofactor biosynthesis; pyridoxine 5'-phosphate biosynthesis; pyridoxine 5'-phosphate from D-erythrose 4-phosphate: step 4/5. Functionally, catalyzes the NAD(P)-dependent oxidation of 4-(phosphooxy)-L-threonine (HTP) into 2-amino-3-oxo-4-(phosphooxy)butyric acid which spontaneously decarboxylates to form 3-amino-2-oxopropyl phosphate (AHAP). The polypeptide is 4-hydroxythreonine-4-phosphate dehydrogenase (Paracoccus denitrificans (strain Pd 1222)).